The sequence spans 99 residues: Nucleoid-associated protein SAG1747 (99 aa).

Residues 1–10 show a composition bias toward low complexity; sequence MMNMQNMMRQ. The interval 1-20 is disordered; sequence MMNMQNMMRQAQKLQKQMEQ.

It belongs to the YbaB/EbfC family. As to quaternary structure, homodimer.

The protein resides in the cytoplasm. It is found in the nucleoid. Its function is as follows. Binds to DNA and alters its conformation. May be involved in regulation of gene expression, nucleoid organization and DNA protection. This chain is Nucleoid-associated protein SAG1747, found in Streptococcus agalactiae serotype V (strain ATCC BAA-611 / 2603 V/R).